Consider the following 187-residue polypeptide: Large ribosomal subunit protein uL5 (187 aa).

It belongs to the universal ribosomal protein uL5 family. In terms of assembly, part of the 50S ribosomal subunit; part of the 5S rRNA/L5/L18/L25 subcomplex. Contacts the 5S rRNA and the P site tRNA. Forms a bridge to the 30S subunit in the 70S ribosome.

Its function is as follows. This is one of the proteins that bind and probably mediate the attachment of the 5S RNA into the large ribosomal subunit, where it forms part of the central protuberance. In the 70S ribosome it contacts protein S13 of the 30S subunit (bridge B1b), connecting the 2 subunits; this bridge is implicated in subunit movement. Contacts the P site tRNA; the 5S rRNA and some of its associated proteins might help stabilize positioning of ribosome-bound tRNAs. This Dinoroseobacter shibae (strain DSM 16493 / NCIMB 14021 / DFL 12) protein is Large ribosomal subunit protein uL5.